The chain runs to 1073 residues: 3-hydroxy-3-methylglutaryl-coenzyme A reductase 1 (1073 aa).

The next 8 membrane-spanning stretches (helical) occupy residues 23-43 (FMVV…DDYI), 181-201 (FDIL…IKVF), 211-231 (FWLA…ALLV), 298-318 (HLVV…LTGL), 326-346 (SLIL…ILGL), 399-419 (IAYF…FWLG), 459-479 (GTVV…MVQL), and 498-518 (IISK…VYFL). The region spanning 182–346 (DILLIFVAYL…YTFFSAILGL (165 aa)) is the SSD domain. Low complexity predominate over residues 542–565 (SSVTATTTTTATGTTSSGAATSKT). The disordered stretch occupies residues 542-589 (SSVTATTTTTATGTTSSGAATSKTIGNNKGLKSVQEIPDNEDESSDEE). The span at 579-589 (PDNEDESSDEE) shows a compositional bias: acidic residues. The active-site Charge relay system is Glu714. 720-726 (STMRGCK) serves as a coordination point for CoA. Residues 781-783 (SRF) and 808-816 (DAMGMNMIS) each bind NADP(+). Residue Lys848 is the Charge relay system of the active site. CoA is bound at residue 877-879 (VLK). Catalysis depends on Asp924, which acts as the Charge relay system. The chain crosses the membrane as a helical span at residues 997–1017 (IVASAVLAAELSLCSALAAGH). A CoA-binding site is contributed by 1021–1022 (SH). His1022 functions as the Proton donor in the catalytic mechanism. The segment at 1025 to 1056 (HNRSKAPAAGATTTTTPAITDSKASNGSIASN) is disordered. 1026-1027 (NR) contributes to the NADP(+) binding site. The segment covering 1030–1042 (APAAGATTTTTPA) has biased composition (low complexity). Residues 1046-1055 (SKASNGSIAS) are compositionally biased toward polar residues.

Belongs to the HMG-CoA reductase family.

The protein resides in the endoplasmic reticulum membrane. It catalyses the reaction (R)-mevalonate + 2 NADP(+) + CoA = (3S)-3-hydroxy-3-methylglutaryl-CoA + 2 NADPH + 2 H(+). Its pathway is metabolic intermediate biosynthesis; (R)-mevalonate biosynthesis; (R)-mevalonate from acetyl-CoA: step 3/3. In terms of biological role, HMG-CoA reductase; part of the first module of ergosterol biosynthesis pathway that includes the early steps of the pathway, conserved across all eukaryotes, and which results in the formation of mevalonate from acetyl-coenzyme A (acetyl-CoA). HMG1 catalyzes the reduction of hydroxymethylglutaryl-CoA (HMG-CoA) to mevalonate. The first module starts with the action of the cytosolic acetyl-CoA acetyltransferase ERG10 that catalyzes the formation of acetoacetyl-CoA. The hydroxymethylglutaryl-CoA synthase ERG13 then condenses acetyl-CoA with acetoacetyl-CoA to form HMG-CoA. The 3-hydroxy-3-methylglutaryl-coenzyme A (HMG-CoA) reductase HMG1 finally reduces HMG-CoA to produce mevalonate. The chain is 3-hydroxy-3-methylglutaryl-coenzyme A reductase 1 from Candida albicans (strain SC5314 / ATCC MYA-2876) (Yeast).